Reading from the N-terminus, the 153-residue chain is ATP synthase subunit b' (153 aa).

The helical transmembrane segment at 20–40 threads the bilayer; sequence TLPLMAVQVVLLTFILNALFF.

It belongs to the ATPase B chain family. F-type ATPases have 2 components, F(1) - the catalytic core - and F(0) - the membrane proton channel. F(1) has five subunits: alpha(3), beta(3), gamma(1), delta(1), epsilon(1). F(0) has four main subunits: a(1), b(1), b'(1) and c(10-14). The alpha and beta chains form an alternating ring which encloses part of the gamma chain. F(1) is attached to F(0) by a central stalk formed by the gamma and epsilon chains, while a peripheral stalk is formed by the delta, b and b' chains.

The protein localises to the cellular thylakoid membrane. Functionally, f(1)F(0) ATP synthase produces ATP from ADP in the presence of a proton or sodium gradient. F-type ATPases consist of two structural domains, F(1) containing the extramembraneous catalytic core and F(0) containing the membrane proton channel, linked together by a central stalk and a peripheral stalk. During catalysis, ATP synthesis in the catalytic domain of F(1) is coupled via a rotary mechanism of the central stalk subunits to proton translocation. Its function is as follows. Component of the F(0) channel, it forms part of the peripheral stalk, linking F(1) to F(0). The b'-subunit is a diverged and duplicated form of b found in plants and photosynthetic bacteria. The protein is ATP synthase subunit b' of Prochlorococcus marinus (strain NATL1A).